The primary structure comprises 640 residues: Probable inactive receptor kinase At3g08680 (640 aa).

The N-terminal stretch at 1–22 is a signal peptide; the sequence is MMKIIAAFLFLLVTTFVSRCLS. 5 LRR repeats span residues 93 to 115, 117 to 138, 139 to 162, 163 to 185, and 186 to 206; these read ALRI…ILSL, FIRS…VLSH, RLVN…QNLT, QLTD…PPRL, and KYLN…VKSF. The tract at residues 222-249 is disordered; the sequence is LTPCPENTTAPSPSPTTPTEGPGTTNIG. The segment covering 226–247 has biased composition (low complexity); that stretch reads PENTTAPSPSPTTPTEGPGTTN. A helical transmembrane segment spans residues 260-280; that stretch reads GAIVGIAVGGSVLLFIILAII. Residues 289–315 are disordered; it reads DGGQDSTAVPKAKPGRSDNKAEEFGSG. The region spanning 341-614 is the Protein kinase domain; sequence RASAEVLGKG…EEVVNMMEEI (274 aa). S343 is subject to Phosphoserine. Position 347-355 (347-355) interacts with ATP; that stretch reads LGKGSYGTT. Position 364 is a phosphothreonine (T364). Residue K369 coordinates ATP. Phosphothreonine occurs at positions 441, 514, and 564. The disordered stretch occupies residues 612 to 640; that stretch reads EEIRPSGSGPGSGNRASSPEMIRSSDSPV.

This sequence belongs to the protein kinase superfamily. Tyr protein kinase family.

Its subcellular location is the membrane. This is Probable inactive receptor kinase At3g08680 from Arabidopsis thaliana (Mouse-ear cress).